Here is a 147-residue protein sequence, read N- to C-terminus: Calcium-regulated heat stable protein 1 (147 aa).

A compositionally biased stretch (pro residues) spans 1 to 12; the sequence is MSSEPPPPPQPP. Positions 1-49 are disordered; it reads MSSEPPPPPQPPTHQTSIGLLDTPRARDRSPSPLRGNVVPSPLPTRRTR. Serine 2 bears the N-acetylserine mark. Serine 30, serine 32, and serine 41 each carry phosphoserine. Threonine 45 is subject to Phosphothreonine. A phosphoserine mark is found at serine 52 and serine 58. In terms of domain architecture, CSD spans 62–129; it reads VYKGVCKCFC…KLQAVEVVIT (68 aa). 2 positions are modified to phosphoserine: serine 146 and serine 147.

Homodimer. Interacts with STYX. Can be phosphorylated by DYRK2 (in vitro). Dephosphorylated by calcineurin in a Ca(2+) dependent manner, and probably by PP2A or PP4 serine phosphatases in cAMP- and PKC-mediated pathways. As to expression, widely expressed.

The protein resides in the cytoplasm. It localises to the P-body. It is found in the cytoplasmic granule. In terms of biological role, binds mRNA and regulates the stability of target mRNA. In Rattus norvegicus (Rat), this protein is Calcium-regulated heat stable protein 1 (Carhsp1).